The following is a 621-amino-acid chain: MQANQWQSVQNRTFTKWFNTKLSSRDLPSVFDLRKDLSDGILLIQLLEIIGDENLGRYNRNPRMRVHRLENVNKALEYIKSKGMPLTNIGPADIVDGNLKLILGLIWTLILRFTIADINEEGLTAKEGLLLWCQRKTANYHPEVDVQDFTRSWTNGLAFCALIHQHRPDLLDYNKLDKKNHRANMQLAFDIAQKSIGIPRLIEVEDVCDVDRPDERSIMTYVAEYFHAFSTLDKVETAARRVERFTEVLMSTHDMKIDYESRMKRLLGSIARMQEYWHTVQFENNYTDVKSHSNNFAKFKATEKREWVKEKIDLESLLGTIQTNLKTYQLRKYEPPAGLKIVDLERQWKDFLSEEANQSKLINTHMREIKESMRIAFADRANSFSKMLSTISNEITNLQGDWRDQLDHVEFLQEHLGPLEVELASVKVLYDNCFQAGIEENDYTMFSYEDLEHEFGITANIIANKIKYLENELLEREKRTLSKQELDGITKVFRHFEKKKSNMLNEVEFYAALASLGLVYDTEEGTALFHRAANSEEGVTYERFTEIVMEELEDRDSARQVLYAFCDVADGKSYVTSDDLLRSQVRPNIVKFLECNMNKHSEGLDYLTWIKQLLAEDKEIV.

Calponin-homology (CH) domains are found at residues Ser-8 to Thr-114 and Leu-123 to Ser-230. The segment at Leu-86–Ile-110 is actin-binding. EF-hand domains lie at Leu-388–Leu-419, Asp-487–Met-549, and Glu-550–Lys-618.

The protein belongs to the alpha-actinin family.

Its subcellular location is the cytoplasm. It is found in the cytoskeleton. Its function is as follows. Binds to actin and is involved in actin-ring formation and organization. Plays a role in cytokinesis and is involved in septation. The sequence is that of Alpha-actinin-like protein 1 (ain1) from Schizosaccharomyces pombe (strain 972 / ATCC 24843) (Fission yeast).